A 199-amino-acid chain; its full sequence is Hematopoietic prostaglandin D synthase (199 aa).

The GST N-terminal domain maps to 2 to 79; sequence PNYKLLYFNM…YLTKNTDLAG (78 aa). Residues Tyr8, Arg14, Trp39, 49–51, and 63–64 each bind glutathione; these read GKI and QS. Positions 81-199 constitute a GST C-terminal domain; the sequence is TALEQCQADA…WILKRPQTKL (119 aa).

This sequence belongs to the GST superfamily. Sigma family. As to quaternary structure, homodimer. Glutathione is required as a cofactor. As to expression, expressed in skin and oviduct.

Its subcellular location is the cytoplasm. The enzyme catalyses prostaglandin H2 = prostaglandin D2. It catalyses the reaction RX + glutathione = an S-substituted glutathione + a halide anion + H(+). It carries out the reaction 2-glyceryl-prostaglandin H2 = 2-glyceryl-prostaglandin D2. Its function is as follows. Bifunctional enzyme which catalyzes both the conversion of PGH2 to PGD2, a prostaglandin involved in smooth muscle contraction/relaxation and a potent inhibitor of platelet aggregation, and the conjugation of glutathione with a wide range of aryl halides and organic isothiocyanates. Also exhibits low glutathione-peroxidase activity. The protein is Hematopoietic prostaglandin D synthase of Mus musculus (Mouse).